The chain runs to 102 residues: RNA-binding protein Hfq (102 aa).

The Sm domain occupies 9–68 (DPFLNALRRERVPVSIYLVNGIKLQGQIESFDQFVILLKNTVSQMVYKHAISTVVPSRPV). The interval 63–102 (VPSRPVSHHSNNAGGGASNNYHHGSNVQGSTAQQDSEETE) is disordered. Positions 70 to 88 (HHSNNAGGGASNNYHHGSN) are enriched in low complexity.

This sequence belongs to the Hfq family. As to quaternary structure, homohexamer.

In terms of biological role, RNA chaperone that binds small regulatory RNA (sRNAs) and mRNAs to facilitate mRNA translational regulation in response to envelope stress, environmental stress and changes in metabolite concentrations. Also binds with high specificity to tRNAs. This is RNA-binding protein Hfq from Salmonella choleraesuis (strain SC-B67).